Consider the following 228-residue polypeptide: Urease accessory protein UreF (228 aa).

This sequence belongs to the UreF family. As to quaternary structure, ureD, UreF and UreG form a complex that acts as a GTP-hydrolysis-dependent molecular chaperone, activating the urease apoprotein by helping to assemble the nickel containing metallocenter of UreC. The UreE protein probably delivers the nickel.

The protein localises to the cytoplasm. Functionally, required for maturation of urease via the functional incorporation of the urease nickel metallocenter. The sequence is that of Urease accessory protein UreF from Prochlorococcus marinus (strain MIT 9301).